The chain runs to 145 residues: D-aminoacyl-tRNA deacylase (145 aa).

A Gly-cisPro motif, important for rejection of L-amino acids motif is present at residues 137 to 138; sequence GP.

It belongs to the DTD family. In terms of assembly, homodimer.

Its subcellular location is the cytoplasm. The enzyme catalyses glycyl-tRNA(Ala) + H2O = tRNA(Ala) + glycine + H(+). The catalysed reaction is a D-aminoacyl-tRNA + H2O = a tRNA + a D-alpha-amino acid + H(+). An aminoacyl-tRNA editing enzyme that deacylates mischarged D-aminoacyl-tRNAs. Also deacylates mischarged glycyl-tRNA(Ala), protecting cells against glycine mischarging by AlaRS. Acts via tRNA-based rather than protein-based catalysis; rejects L-amino acids rather than detecting D-amino acids in the active site. By recycling D-aminoacyl-tRNA to D-amino acids and free tRNA molecules, this enzyme counteracts the toxicity associated with the formation of D-aminoacyl-tRNA entities in vivo and helps enforce protein L-homochirality. The protein is D-aminoacyl-tRNA deacylase of Lactobacillus acidophilus (strain ATCC 700396 / NCK56 / N2 / NCFM).